The sequence spans 194 residues: uncharacterized protein (194 aa).

Positions 1–29 are cleaved as a signal peptide; the sequence is MKKAFLVFLSVVLVTTVFLVKQQESVAQA. Residues 104 to 131 adopt a coiled-coil conformation; it reads KVDELLKKAGQIVEEKVEAAKEIAASKD. Residues 149 to 171 form a helical membrane-spanning segment; that stretch reads YFYYVSYVAAAGALILIILAIDI.

It is found in the membrane. This is an uncharacterized protein from Bacillus subtilis (strain 168).